Here is a 483-residue protein sequence, read N- to C-terminus: 6-phosphogluconate dehydrogenase, decarboxylating (483 aa).

NADP(+) is bound by residues 10-15 (GLAVMG) and 33-35 (NRT). Lys38 carries the post-translational modification N6-acetyllysine. Ser57 bears the Phosphoserine mark. Lys59 carries the post-translational modification N6-acetyllysine. NADP(+)-binding positions include 75–77 (VKA) and Asn103. Substrate contacts are provided by residues Asn103 and 129–131 (SGG). Phosphoserine is present on Ser129. The active-site Proton acceptor is Lys184. 187 to 188 (HN) is a binding site for substrate. Residue Glu191 is the Proton donor of the active site. Residues Tyr192, Lys261, Arg288, Arg447, and His453 each coordinate substrate. NADP(+) is bound at residue 478 to 481 (SSSY).

It belongs to the 6-phosphogluconate dehydrogenase family. In terms of assembly, homodimer.

It localises to the cytoplasm. The catalysed reaction is 6-phospho-D-gluconate + NADP(+) = D-ribulose 5-phosphate + CO2 + NADPH. It participates in carbohydrate degradation; pentose phosphate pathway; D-ribulose 5-phosphate from D-glucose 6-phosphate (oxidative stage): step 3/3. In terms of biological role, catalyzes the oxidative decarboxylation of 6-phosphogluconate to ribulose 5-phosphate and CO(2), with concomitant reduction of NADP to NADPH. This Mus musculus (Mouse) protein is 6-phosphogluconate dehydrogenase, decarboxylating (Pgd).